The primary structure comprises 213 residues: NAD(P)H-hydrate epimerase (213 aa).

Positions 8–210 (MYNIEENGHA…KIGIPPEAEK (203 aa)) constitute a YjeF N-terminal domain. 55 to 59 (NNGGD) is a binding site for (6S)-NADPHX. The K(+) site is built by asparagine 56 and aspartate 122. (6S)-NADPHX contacts are provided by residues 126 to 132 (GTGITGE), tyrosine 137, and aspartate 155. Serine 158 contributes to the K(+) binding site.

It belongs to the NnrE/AIBP family. K(+) serves as cofactor.

The catalysed reaction is (6R)-NADHX = (6S)-NADHX. It carries out the reaction (6R)-NADPHX = (6S)-NADPHX. Catalyzes the epimerization of the S- and R-forms of NAD(P)HX, a damaged form of NAD(P)H that is a result of enzymatic or heat-dependent hydration. This is a prerequisite for the S-specific NAD(P)H-hydrate dehydratase to allow the repair of both epimers of NAD(P)HX. The polypeptide is NAD(P)H-hydrate epimerase (Cenarchaeum symbiosum (strain A)).